Reading from the N-terminus, the 972-residue chain is Glycine dehydrogenase (decarboxylating) (972 aa).

At Lys713 the chain carries N6-(pyridoxal phosphate)lysine.

It belongs to the GcvP family. In terms of assembly, the glycine cleavage system is composed of four proteins: P, T, L and H. Requires pyridoxal 5'-phosphate as cofactor.

It catalyses the reaction N(6)-[(R)-lipoyl]-L-lysyl-[glycine-cleavage complex H protein] + glycine + H(+) = N(6)-[(R)-S(8)-aminomethyldihydrolipoyl]-L-lysyl-[glycine-cleavage complex H protein] + CO2. The glycine cleavage system catalyzes the degradation of glycine. The P protein binds the alpha-amino group of glycine through its pyridoxal phosphate cofactor; CO(2) is released and the remaining methylamine moiety is then transferred to the lipoamide cofactor of the H protein. This Aromatoleum aromaticum (strain DSM 19018 / LMG 30748 / EbN1) (Azoarcus sp. (strain EbN1)) protein is Glycine dehydrogenase (decarboxylating).